We begin with the raw amino-acid sequence, 539 residues long: Probable methionine--tRNA ligase, mitochondrial (539 aa).

The short motif at 28–38 (FYVNAAPHLGH) is the 'HIGH' region element. Residues 326–330 (KMSKS) carry the 'KMSKS' region motif. ATP is bound at residue K329.

It belongs to the class-I aminoacyl-tRNA synthetase family.

Its subcellular location is the mitochondrion matrix. The enzyme catalyses tRNA(Met) + L-methionine + ATP = L-methionyl-tRNA(Met) + AMP + diphosphate. This Schizosaccharomyces pombe (strain 972 / ATCC 24843) (Fission yeast) protein is Probable methionine--tRNA ligase, mitochondrial.